Reading from the N-terminus, the 309-residue chain is Malate dehydrogenase (309 aa).

Residues 9–14 (GAGFVG) and Asp-33 contribute to the NAD(+) site. Arg-82 and Arg-88 together coordinate substrate. Residues Asn-95 and 118-120 (VNN) each bind NAD(+). 2 residues coordinate substrate: Asn-120 and Arg-151. His-175 serves as the catalytic Proton acceptor.

Belongs to the LDH/MDH superfamily. MDH type 3 family.

It carries out the reaction (S)-malate + NAD(+) = oxaloacetate + NADH + H(+). Catalyzes the reversible oxidation of malate to oxaloacetate. This is Malate dehydrogenase from Chloroflexus aurantiacus (strain ATCC 29364 / DSM 637 / Y-400-fl).